The chain runs to 312 residues: Ornithine carbamoyltransferase (312 aa).

Residues 50–53 (STRT), Gln77, Arg101, and 128–131 (HPCQ) contribute to the carbamoyl phosphate site. L-ornithine-binding positions include Asn159, Asp223, and 227–228 (SM). Residues 263 to 264 (CL) and Arg291 each bind carbamoyl phosphate.

The protein belongs to the aspartate/ornithine carbamoyltransferase superfamily. OTCase family.

Its subcellular location is the cytoplasm. The catalysed reaction is carbamoyl phosphate + L-ornithine = L-citrulline + phosphate + H(+). Its pathway is amino-acid biosynthesis; L-arginine biosynthesis; L-arginine from L-ornithine and carbamoyl phosphate: step 1/3. Reversibly catalyzes the transfer of the carbamoyl group from carbamoyl phosphate (CP) to the N(epsilon) atom of ornithine (ORN) to produce L-citrulline. The chain is Ornithine carbamoyltransferase from Acidothermus cellulolyticus (strain ATCC 43068 / DSM 8971 / 11B).